The sequence spans 143 residues: Sporulation-specific protein 73 (143 aa).

The protein belongs to the SPO73 family. Interacts with SPO71.

The protein resides in the cytoplasm. The protein localises to the prospore membrane. Required for spore wall assembly and ascus formation. Involved in the formation and elongation of prospore membranes. In Saccharomyces cerevisiae (strain ATCC 204508 / S288c) (Baker's yeast), this protein is Sporulation-specific protein 73.